Reading from the N-terminus, the 317-residue chain is L-lactate dehydrogenase 1 (317 aa).

Residues V17, D38, K43, Y69, and 83–84 (GA) each bind NAD(+). Substrate-binding residues include Q86 and R92. NAD(+) contacts are provided by residues S105, 122 to 124 (ATN), and S147. 124–127 (NPVD) serves as a coordination point for substrate. 152–155 (DSAR) serves as a coordination point for substrate. The active-site Proton acceptor is H179. Y223 is modified (phosphotyrosine). T232 serves as a coordination point for substrate.

Belongs to the LDH/MDH superfamily. LDH family. Homotetramer.

Its subcellular location is the cytoplasm. The catalysed reaction is (S)-lactate + NAD(+) = pyruvate + NADH + H(+). It functions in the pathway fermentation; pyruvate fermentation to lactate; (S)-lactate from pyruvate: step 1/1. Functionally, catalyzes the conversion of lactate to pyruvate (Potential). Appears to be the primary factor that allows S.aureus growth during nitrosative stress in both aerobically and anaerobically cultured cells. This chain is L-lactate dehydrogenase 1, found in Staphylococcus aureus (strain USA300).